The sequence spans 165 residues: MKTSRLPIAIQQAVMRRLREKLAQANLKLGRNYPEPKLSYTQRGTSAGTAWLESYEIRLNPVLLLENSEAFIEEVVPHELAHLLVWKHFGRVAPHGKEWKWMMESVLGVPARRTHQFELQSVRRNTFPYRCKCQEHQLTVRRHNRVVRGEAVYRCVHCGEQLIAK.

The SprT-like domain occupies Glu-20–Leu-162. His-78 is a Zn(2+) binding site. Residue Glu-79 is part of the active site. Residue His-82 coordinates Zn(2+).

The protein belongs to the SprT family. The cofactor is Zn(2+).

It is found in the cytoplasm. In Escherichia coli (strain SMS-3-5 / SECEC), this protein is Protein SprT.